A 316-amino-acid chain; its full sequence is Biotin synthase (316 aa).

A Radical SAM core domain is found at 36-264; it reads FDNRITLCAI…TATLRICGGR (229 aa). [4Fe-4S] cluster-binding residues include Cys-53, Cys-57, and Cys-60. Cys-129, Cys-189, and Arg-259 together coordinate [2Fe-2S] cluster.

It belongs to the radical SAM superfamily. Biotin synthase family. In terms of assembly, homodimer. Requires [4Fe-4S] cluster as cofactor. It depends on [2Fe-2S] cluster as a cofactor.

It carries out the reaction (4R,5S)-dethiobiotin + (sulfur carrier)-SH + 2 reduced [2Fe-2S]-[ferredoxin] + 2 S-adenosyl-L-methionine = (sulfur carrier)-H + biotin + 2 5'-deoxyadenosine + 2 L-methionine + 2 oxidized [2Fe-2S]-[ferredoxin]. Its pathway is cofactor biosynthesis; biotin biosynthesis; biotin from 7,8-diaminononanoate: step 2/2. Its function is as follows. Catalyzes the conversion of dethiobiotin (DTB) to biotin by the insertion of a sulfur atom into dethiobiotin via a radical-based mechanism. This Desulfovibrio desulfuricans (strain ATCC 27774 / DSM 6949 / MB) protein is Biotin synthase.